Reading from the N-terminus, the 869-residue chain is DNA mismatch repair protein MutS (869 aa).

618–625 (GPNMGGKS) serves as a coordination point for ATP.

The protein belongs to the DNA mismatch repair MutS family.

This protein is involved in the repair of mismatches in DNA. It is possible that it carries out the mismatch recognition step. This protein has a weak ATPase activity. The sequence is that of DNA mismatch repair protein MutS from Zymomonas mobilis subsp. mobilis (strain ATCC 31821 / ZM4 / CP4).